Here is a 330-residue protein sequence, read N- to C-terminus: Probable xanthine dehydrogenase subunit A (330 aa).

Could be composed of four subunits: PucA, PucC, PucD and PucE.

It carries out the reaction xanthine + NAD(+) + H2O = urate + NADH + H(+). The enzyme catalyses hypoxanthine + NAD(+) + H2O = xanthine + NADH + H(+). The protein operates within purine metabolism; hypoxanthine degradation; urate from hypoxanthine: step 1/2. It functions in the pathway purine metabolism; hypoxanthine degradation; urate from hypoxanthine: step 2/2. In terms of biological role, oxidizes hypoxanthine and xanthine to uric acid. PucA subunit could exert a molybdenum cofactor recruiting function. The chain is Probable xanthine dehydrogenase subunit A (pucA) from Bacillus subtilis (strain 168).